The following is a 555-amino-acid chain: Hydroxylamine reductase (555 aa).

Positions 3, 6, 18, and 25 each coordinate [4Fe-4S] cluster. The hybrid [4Fe-2O-2S] cluster site is built by histidine 252, glutamate 276, cysteine 320, cysteine 407, cysteine 435, cysteine 460, glutamate 494, and lysine 496. Cysteine 407 is subject to Cysteine persulfide.

Belongs to the HCP family. Requires [4Fe-4S] cluster as cofactor. Hybrid [4Fe-2O-2S] cluster is required as a cofactor.

It localises to the cytoplasm. The enzyme catalyses A + NH4(+) + H2O = hydroxylamine + AH2 + H(+). Catalyzes the reduction of hydroxylamine to form NH(3) and H(2)O. This chain is Hydroxylamine reductase, found in Burkholderia ambifaria (strain MC40-6).